The primary structure comprises 262 residues: Type III pantothenate kinase (262 aa).

ATP is bound at residue 9–16 (DAGNSRIK). Substrate-binding positions include tyrosine 96 and 103–106 (GSDR). The active-site Proton acceptor is the aspartate 105. Position 129 (threonine 129) interacts with ATP. Threonine 189 provides a ligand contact to substrate.

This sequence belongs to the type III pantothenate kinase family. As to quaternary structure, homodimer. NH4(+) serves as cofactor. K(+) is required as a cofactor.

The protein resides in the cytoplasm. It carries out the reaction (R)-pantothenate + ATP = (R)-4'-phosphopantothenate + ADP + H(+). It functions in the pathway cofactor biosynthesis; coenzyme A biosynthesis; CoA from (R)-pantothenate: step 1/5. Catalyzes the phosphorylation of pantothenate (Pan), the first step in CoA biosynthesis. The polypeptide is Type III pantothenate kinase (Burkholderia multivorans (strain ATCC 17616 / 249)).